We begin with the raw amino-acid sequence, 153 residues long: MAAGLFGLSARRLLAAAATRGLPAARVRWESSFSRTVVAPSAVAGKRPPEPTTQWQEDPEPEDENLYEKNPDSHGYDKDPVLDVWNMRLVFFFGVSIILVLGSTFVAYLPDYRMKEWSRREAERLVKYREANGLPIMESNCFDPSKIELPEDE.

The N-terminal 29 residues, 1–29 (MAAGLFGLSARRLLAAAATRGLPAARVRW), are a transit peptide targeting the mitochondrion. The disordered stretch occupies residues 40–77 (PSAVAGKRPPEPTTQWQEDPEPEDENLYEKNPDSHGYD). The segment covering 66 to 77 (LYEKNPDSHGYD) has biased composition (basic and acidic residues). A helical transmembrane segment spans residues 89–109 (LVFFFGVSIILVLGSTFVAYL).

The protein belongs to the complex I NDUFB11 subunit family. Complex I is composed of 45 different subunits. Interacts with BCAP31.

It localises to the mitochondrion inner membrane. Accessory subunit of the mitochondrial membrane respiratory chain NADH dehydrogenase (Complex I), that is believed not to be involved in catalysis. Complex I functions in the transfer of electrons from NADH to the respiratory chain. The immediate electron acceptor for the enzyme is believed to be ubiquinone. The sequence is that of NADH dehydrogenase [ubiquinone] 1 beta subcomplex subunit 11, mitochondrial (NDUFB11) from Gorilla gorilla gorilla (Western lowland gorilla).